A 280-amino-acid polypeptide reads, in one-letter code: 2-dehydro-3-deoxyphosphooctonate aldolase (280 aa).

It belongs to the KdsA family.

It localises to the cytoplasm. It carries out the reaction D-arabinose 5-phosphate + phosphoenolpyruvate + H2O = 3-deoxy-alpha-D-manno-2-octulosonate-8-phosphate + phosphate. It participates in carbohydrate biosynthesis; 3-deoxy-D-manno-octulosonate biosynthesis; 3-deoxy-D-manno-octulosonate from D-ribulose 5-phosphate: step 2/3. The protein operates within bacterial outer membrane biogenesis; lipopolysaccharide biosynthesis. The polypeptide is 2-dehydro-3-deoxyphosphooctonate aldolase (Neisseria meningitidis serogroup C / serotype 2a (strain ATCC 700532 / DSM 15464 / FAM18)).